The chain runs to 441 residues: ATP-dependent protease ATPase subunit HslU (441 aa).

ATP-binding positions include I18, 60–65, D254, E319, and R391; that span reads GVGKTE.

It belongs to the ClpX chaperone family. HslU subfamily. As to quaternary structure, a double ring-shaped homohexamer of HslV is capped on each side by a ring-shaped HslU homohexamer. The assembly of the HslU/HslV complex is dependent on binding of ATP.

The protein localises to the cytoplasm. ATPase subunit of a proteasome-like degradation complex; this subunit has chaperone activity. The binding of ATP and its subsequent hydrolysis by HslU are essential for unfolding of protein substrates subsequently hydrolyzed by HslV. HslU recognizes the N-terminal part of its protein substrates and unfolds these before they are guided to HslV for hydrolysis. The sequence is that of ATP-dependent protease ATPase subunit HslU from Actinobacillus succinogenes (strain ATCC 55618 / DSM 22257 / CCUG 43843 / 130Z).